A 37-amino-acid chain; its full sequence is Large ribosomal subunit protein bL36c (37 aa).

The protein belongs to the bacterial ribosomal protein bL36 family.

It is found in the plastid. The protein localises to the chloroplast. In Chara vulgaris (Common stonewort), this protein is Large ribosomal subunit protein bL36c.